A 38-amino-acid chain; its full sequence is Mating hormone A-factor 2 (38 aa).

Polar residues predominate over residues 1–12; the sequence is MQPITTASTQAT. Residues 1 to 20 are disordered; that stretch reads MQPITTASTQATQKDKSSEK. A propeptide spanning residues 1 to 23 is cleaved from the precursor; the sequence is MQPITTASTQATQKDKSSEKKDN. Residue Cys35 is modified to Cysteine methyl ester. The S-farnesyl cysteine moiety is linked to residue Cys35. Positions 36–38 are cleaved as a propeptide — removed in mature form; the sequence is VIA.

The protein localises to the cell membrane. The active factor is excreted into the culture medium by haploid cells of the A mating type and acts on cells of the opposite mating type (type alpha). It mediates the conjugation process between the two types by inhibiting the initiation of DNA synthesis in type alpha cells and synchronizing them with type A. This is Mating hormone A-factor 2 (MFA2) from Saccharomyces cerevisiae (strain ATCC 204508 / S288c) (Baker's yeast).